The chain runs to 156 residues: MHQYHKLQVEAIYCGTVIDHIPAQVGIKLLSWFKLTATDERITIGLNLPSNKQGKKDLIKIENVLLTEEQANQLAIYAPYATVNRIANYNVVCKRTLTLPESIANVFICPNSNCVSRSEPVASGFIIKTRGKQIHLKCKYCEKVFERRAVESSNLK.

The Zn(2+) site is built by C109, C114, C138, and C141.

The protein belongs to the PyrI family. In terms of assembly, contains catalytic and regulatory chains. Zn(2+) serves as cofactor.

Its function is as follows. Involved in allosteric regulation of aspartate carbamoyltransferase. This Baumannia cicadellinicola subsp. Homalodisca coagulata protein is Aspartate carbamoyltransferase regulatory chain.